Reading from the N-terminus, the 180-residue chain is Protein PHLOEM PROTEIN 2-LIKE A9 (180 aa).

The tract at residues 1-21 (MSSQKSSHHKADSKMEQDNNR) is disordered. Positions 9–21 (HKADSKMEQDNNR) are enriched in basic and acidic residues.

This chain is Protein PHLOEM PROTEIN 2-LIKE A9 (PP2A9), found in Arabidopsis thaliana (Mouse-ear cress).